The sequence spans 197 residues: ATP-dependent Clp protease proteolytic subunit 2 (197 aa).

The active-site Nucleophile is Ser97. Residue His122 is part of the active site.

Belongs to the peptidase S14 family. As to quaternary structure, fourteen ClpP subunits assemble into 2 heptameric rings which stack back to back to give a disk-like structure with a central cavity, resembling the structure of eukaryotic proteasomes.

It localises to the cytoplasm. It catalyses the reaction Hydrolysis of proteins to small peptides in the presence of ATP and magnesium. alpha-casein is the usual test substrate. In the absence of ATP, only oligopeptides shorter than five residues are hydrolyzed (such as succinyl-Leu-Tyr-|-NHMec, and Leu-Tyr-Leu-|-Tyr-Trp, in which cleavage of the -Tyr-|-Leu- and -Tyr-|-Trp bonds also occurs).. Its function is as follows. Cleaves peptides in various proteins in a process that requires ATP hydrolysis. Has a chymotrypsin-like activity. Plays a major role in the degradation of misfolded proteins. This is ATP-dependent Clp protease proteolytic subunit 2 from Leptospira interrogans serogroup Icterohaemorrhagiae serovar copenhageni (strain Fiocruz L1-130).